Reading from the N-terminus, the 354-residue chain is DNA integrity scanning protein DisA (354 aa).

Positions 6-144 (GMKIKDTLKI…GDIKYVLRDS (139 aa)) constitute a DAC domain. ATP contacts are provided by residues Gly73, Leu91, and 104–108 (TRHRT).

The protein belongs to the DisA family. In terms of assembly, homooctamer. Mg(2+) is required as a cofactor.

It carries out the reaction 2 ATP = 3',3'-c-di-AMP + 2 diphosphate. In terms of biological role, participates in a DNA-damage check-point that is active prior to asymmetric division when DNA is damaged. DisA forms globular foci that rapidly scan along the chromosomes during sporulation, searching for lesions. When a lesion is present, DisA pauses at the lesion site. This triggers a cellular response that culminates in a temporary block in sporulation initiation. Its function is as follows. Also has diadenylate cyclase activity, catalyzing the condensation of 2 ATP molecules into cyclic di-AMP (c-di-AMP). c-di-AMP acts as a signaling molecule that couples DNA integrity with progression of sporulation. The rise in c-di-AMP level generated by DisA while scanning the chromosome, operates as a positive signal that advances sporulation; upon encountering a lesion, the DisA focus arrests at the damaged site and halts c-di-AMP synthesis. The protein is DNA integrity scanning protein DisA of Clostridium botulinum (strain Alaska E43 / Type E3).